The following is a 357-amino-acid chain: 3-isopropylmalate dehydrogenase (357 aa).

Arg97, Arg107, Arg135, and Asp224 together coordinate substrate. Asp224, Asp248, and Asp252 together coordinate Mg(2+). 282-294 (GSAPDIAGKNIAN) lines the NAD(+) pocket.

The protein belongs to the isocitrate and isopropylmalate dehydrogenases family. LeuB type 1 subfamily. In terms of assembly, homodimer. Mg(2+) is required as a cofactor. Requires Mn(2+) as cofactor.

It localises to the cytoplasm. The enzyme catalyses (2R,3S)-3-isopropylmalate + NAD(+) = 4-methyl-2-oxopentanoate + CO2 + NADH. It functions in the pathway amino-acid biosynthesis; L-leucine biosynthesis; L-leucine from 3-methyl-2-oxobutanoate: step 3/4. Catalyzes the oxidation of 3-carboxy-2-hydroxy-4-methylpentanoate (3-isopropylmalate) to 3-carboxy-4-methyl-2-oxopentanoate. The product decarboxylates to 4-methyl-2 oxopentanoate. The polypeptide is 3-isopropylmalate dehydrogenase (Prochlorococcus marinus subsp. pastoris (strain CCMP1986 / NIES-2087 / MED4)).